A 477-amino-acid polypeptide reads, in one-letter code: Tripartite motif-containing protein 72 (477 aa).

Zn(2+) contacts are provided by Cys14, Cys17, Cys29, His31, Cys34, Cys37, Cys53, Cys56, Cys86, His89, Cys97, Asp100, Cys105, Cys108, His114, and His117. The RING-type zinc-finger motif lies at 14-57 (CPLCLQLFDAPVTAECGHSFCRACLGRVAGEPAADGTVLCPCCQ). The B box-type zinc finger occupies 81–122 (VPQGHCEEHLDPLSIYCEQDRALVCGVCASLGSHRGHRLLPA). The stretch at 135–232 (QQKLQLQEAC…EKVLEEVADK (98 aa)) forms a coiled coil. Cys144 is modified (S-nitrosocysteine). Phosphoserine is present on Ser255. One can recognise a B30.2/SPRY domain in the interval 271-475 (DFKFQVWRKM…PLLLVGPEGA (205 aa)).

The protein belongs to the TRIM/RBCC family. Homodimer. Homooligomer; disulfide-linked. Oligomerizes on the phospholipid membrane. Interacts with DYSF and CAV3. Disulfide bond formation at Cys-242 occurs in case of membrane damage that cause the entry of the oxidized milieu of the extracellular space, resulting in homooligomerization. In terms of processing, S-nitrosylation at Cys-144 stabilizes TRIM72 and protects against oxidation-induced protein degradation and cell death.

It localises to the cell membrane. The protein resides in the sarcolemma. It is found in the cytoplasmic vesicle membrane. It catalyses the reaction S-ubiquitinyl-[E2 ubiquitin-conjugating enzyme]-L-cysteine + [acceptor protein]-L-lysine = [E2 ubiquitin-conjugating enzyme]-L-cysteine + N(6)-ubiquitinyl-[acceptor protein]-L-lysine.. It functions in the pathway protein modification; protein ubiquitination. Specifically binds phosphatidylserine. The binding to phospholipids enhances ubiquitination activity. In terms of biological role, muscle-specific E3 ubiquitin-protein ligase that plays a central role in cell membrane repair by nucleating the assembly of the repair machinery at injury sites. Its ubiquitination activity is mediated by E2 ubiquitin-conjugating enzymes UBE2D1, UBE2D2 and UBE2D3. Acts as a sensor of oxidation: upon membrane damage, entry of extracellular oxidative environment results in disulfide bond formation and homooligomerization at the injury site. This oligomerization acts as a nucleation site for recruitment of TRIM72-containing vesicles to the injury site, leading to membrane patch formation. Probably acts upstream of the Ca(2+)-dependent membrane resealing process. Required for transport of DYSF to sites of cell injury during repair patch formation. Regulates membrane budding and exocytosis. May be involved in the regulation of the mobility of KCNB1-containing endocytic vesicles. The chain is Tripartite motif-containing protein 72 from Homo sapiens (Human).